Here is a 351-residue protein sequence, read N- to C-terminus: Photosystem II D2 protein (351 aa).

Residues 39-59 form a helical membrane-spanning segment; the sequence is TAYLAVGGWFTGTTFVTSWYT. A chlorophyll a-binding site is contributed by histidine 116. A helical transmembrane segment spans residues 123–139; that stretch reads GFCLRQFEIARLVGIRP. Pheophytin a contacts are provided by glutamine 128 and asparagine 141. A helical transmembrane segment spans residues 151–164; the sequence is IFVSVFLLYPLGQA. Histidine 196 provides a ligand contact to chlorophyll a. A helical transmembrane segment spans residues 206–226; it reads GALLCAIHGATVENTLFEDGD. Positions 213 and 260 each coordinate a plastoquinone. Histidine 213 is a binding site for Fe cation. Histidine 267 serves as a coordination point for Fe cation. The helical transmembrane segment at 277–293 threads the bilayer; the sequence is GLWTSAIGIVGLALNLR.

It belongs to the reaction center PufL/M/PsbA/D family. In terms of assembly, PSII is composed of 1 copy each of membrane proteins PsbA, PsbB, PsbC, PsbD, PsbE, PsbF, PsbH, PsbI, PsbJ, PsbK, PsbL, PsbM, PsbT, PsbX, PsbY, PsbZ, Psb30/Ycf12, at least 3 peripheral proteins of the oxygen-evolving complex and a large number of cofactors. It forms dimeric complexes. The D1/D2 heterodimer binds P680, chlorophylls that are the primary electron donor of PSII, and subsequent electron acceptors. It shares a non-heme iron and each subunit binds pheophytin, quinone, additional chlorophylls, carotenoids and lipids. There is also a Cl(-1) ion associated with D1 and D2, which is required for oxygen evolution. The PSII complex binds additional chlorophylls, carotenoids and specific lipids. is required as a cofactor.

It is found in the plastid. Its subcellular location is the chloroplast thylakoid membrane. It catalyses the reaction 2 a plastoquinone + 4 hnu + 2 H2O = 2 a plastoquinol + O2. In terms of biological role, photosystem II (PSII) is a light-driven water:plastoquinone oxidoreductase that uses light energy to abstract electrons from H(2)O, generating O(2) and a proton gradient subsequently used for ATP formation. It consists of a core antenna complex that captures photons, and an electron transfer chain that converts photonic excitation into a charge separation. The D1/D2 (PsbA/PsbD) reaction center heterodimer binds P680, the primary electron donor of PSII as well as several subsequent electron acceptors. D2 is needed for assembly of a stable PSII complex. The sequence is that of Photosystem II D2 protein from Heterosigma akashiwo (strain NIES-293 / 8280G21-1).